The sequence spans 399 residues: Methylthioribose kinase (399 aa).

Residues Asn-40, Lys-57, and 111 to 113 (EDL) contribute to the ATP site. Position 229 (Asp-229) interacts with substrate. 246-248 (DAE) is an ATP binding site. Arg-344 is a binding site for substrate.

The protein belongs to the methylthioribose kinase family. As to quaternary structure, homodimer.

The enzyme catalyses 5-(methylsulfanyl)-D-ribose + ATP = 5-(methylsulfanyl)-alpha-D-ribose 1-phosphate + ADP + H(+). It participates in amino-acid biosynthesis; L-methionine biosynthesis via salvage pathway; S-methyl-5-thio-alpha-D-ribose 1-phosphate from S-methyl-5'-thioadenosine (hydrolase route): step 2/2. In terms of biological role, catalyzes the phosphorylation of methylthioribose into methylthioribose-1-phosphate. This chain is Methylthioribose kinase, found in Enterobacter sp. (strain 638).